A 380-amino-acid chain; its full sequence is 1-deoxy-D-xylulose 5-phosphate reductoisomerase (380 aa).

Residues Ser-10, Gly-11, Ser-12, Ile-13, Gly-36, Lys-37, Asn-38, and Asn-120 each contribute to the NADPH site. Lys-121 lines the 1-deoxy-D-xylulose 5-phosphate pocket. Glu-122 contacts NADPH. Asp-146 is a binding site for Mn(2+). Residues Ser-147, Glu-148, Ser-172, and His-195 each coordinate 1-deoxy-D-xylulose 5-phosphate. Residue Glu-148 coordinates Mn(2+). Gly-201 lines the NADPH pocket. 1-deoxy-D-xylulose 5-phosphate-binding residues include Ser-208, Asn-213, Lys-214, and Glu-217. Glu-217 contacts Mn(2+).

The protein belongs to the DXR family. The cofactor is Mg(2+). Requires Mn(2+) as cofactor.

It catalyses the reaction 2-C-methyl-D-erythritol 4-phosphate + NADP(+) = 1-deoxy-D-xylulose 5-phosphate + NADPH + H(+). Its pathway is isoprenoid biosynthesis; isopentenyl diphosphate biosynthesis via DXP pathway; isopentenyl diphosphate from 1-deoxy-D-xylulose 5-phosphate: step 1/6. In terms of biological role, catalyzes the NADPH-dependent rearrangement and reduction of 1-deoxy-D-xylulose-5-phosphate (DXP) to 2-C-methyl-D-erythritol 4-phosphate (MEP). This Bacillus cereus (strain AH187) protein is 1-deoxy-D-xylulose 5-phosphate reductoisomerase.